Here is a 305-residue protein sequence, read N- to C-terminus: Translation initiation factor eIF2B subunit alpha (305 aa).

Lysine 35 is modified (N6-acetyllysine).

Belongs to the eIF-2B alpha/beta/delta subunits family. Component of the translation initiation factor 2B (eIF2B) complex which is a heterodecamer of two sets of five different subunits: alpha, beta, gamma, delta and epsilon. Subunits alpha, beta and delta comprise a regulatory subcomplex and subunits epsilon and gamma comprise a catalytic subcomplex. Within the complex, the hexameric regulatory complex resides at the center, with the two heterodimeric catalytic subcomplexes bound on opposite sides.

The protein resides in the cytoplasm. It localises to the cytosol. Its activity is regulated as follows. Activated by the chemical integrated stress response (ISR) inhibitor ISRIB which stimulates guanine nucleotide exchange factor activity for both phosphorylated and unphosphorylated eIF2. Its function is as follows. Acts as a component of the translation initiation factor 2B (eIF2B) complex, which catalyzes the exchange of GDP for GTP on eukaryotic initiation factor 2 (eIF2) gamma subunit. Its guanine nucleotide exchange factor activity is repressed when bound to eIF2 complex phosphorylated on the alpha subunit, thereby limiting the amount of methionyl-initiator methionine tRNA available to the ribosome and consequently global translation is repressed. The polypeptide is Translation initiation factor eIF2B subunit alpha (EIF2B1) (Pongo abelii (Sumatran orangutan)).